We begin with the raw amino-acid sequence, 111 residues long: Microtubule nucleation factor SSNA1 (111 aa).

The stretch at 6–71 forms a coiled coil; it reads QALQNHNNEL…ARKTETKNEY (66 aa).

The protein belongs to the SSNA1 family. Self-assembles into fibrils in a head-to-tail fashion.

It localises to the cytoplasm. It is found in the cytoskeleton. Its subcellular location is the flagellum basal body. The protein resides in the flagellum axoneme. In terms of biological role, microtubule-binding protein which stabilizes dynamic microtubules by slowing growth and shrinkage at both plus and minus ends and serves as a sensor of microtubule damage. Induces microtubule branching which is mediated by the formation of long SSNA1 fibrils which guide microtubule protofilaments to split apart from the mother microtubule and form daughter microtubules. Required for cell division. In Chlamydomonas reinhardtii (Chlamydomonas smithii), this protein is Microtubule nucleation factor SSNA1.